Here is a 128-residue protein sequence, read N- to C-terminus: Glyoxylase-like domain-containing protein (128 aa).

In terms of domain architecture, VOC spans 6–125; sequence QISGIEIPAT…EGNTHAICTR (120 aa).

Its pathway is mycotoxin biosynthesis. In terms of biological role, glyoxylase-like domain-containing protein; part of the gene cluster that mediates the biosynthesis of the selective antifungal agent ascochitine, an o-quinone methide that plays a possible protective role against other microbial competitors in nature and is considered to be important for pathogenicity of legume-associated Didymella species. The pathway probably begins with the synthesis of a keto-aldehyde intermediate by the ascochitine non-reducing polyketide synthase pksAC from successive condensations of 4 malonyl-CoA units, presumably with a simple acetyl-CoA starter unit. Release of the keto-aldehyde intermediate is consistent with the presence of the C-terminal reductive release domain. The HR-PKS (orf7) probably makes a diketide starter unit which is passed to the non-reducing polyketide synthase pksAC for further extension, producing ascochital and ascochitine. The aldehyde dehydrogenase (orf1), the 2-oxoglutarate-dependent dioxygenase (orf3) and the dehydrogenase (orf9) are probably involved in subsequent oxidations of methyl groups to the carboxylic acid of the heterocyclic ring. The ascochitine gene cluster also includes a gene encoding a short peptide with a cupin domain (orf2) that is often found in secondary metabolite gene clusters and which function has still to be determined. This Didymella fabae (Leaf and pod spot disease fungus) protein is Glyoxylase-like domain-containing protein.